The following is a 154-amino-acid chain: Crossover junction endodeoxyribonuclease RuvC (154 aa).

Active-site residues include Asp-7, Glu-67, and Asp-139. Mg(2+) is bound by residues Asp-7, Glu-67, and Asp-139.

It belongs to the RuvC family. In terms of assembly, homodimer which binds Holliday junction (HJ) DNA. The HJ becomes 2-fold symmetrical on binding to RuvC with unstacked arms; it has a different conformation from HJ DNA in complex with RuvA. In the full resolvosome a probable DNA-RuvA(4)-RuvB(12)-RuvC(2) complex forms which resolves the HJ. Mg(2+) is required as a cofactor.

It localises to the cytoplasm. The enzyme catalyses Endonucleolytic cleavage at a junction such as a reciprocal single-stranded crossover between two homologous DNA duplexes (Holliday junction).. Its function is as follows. The RuvA-RuvB-RuvC complex processes Holliday junction (HJ) DNA during genetic recombination and DNA repair. Endonuclease that resolves HJ intermediates. Cleaves cruciform DNA by making single-stranded nicks across the HJ at symmetrical positions within the homologous arms, yielding a 5'-phosphate and a 3'-hydroxyl group; requires a central core of homology in the junction. The consensus cleavage sequence is 5'-(A/T)TT(C/G)-3'. Cleavage occurs on the 3'-side of the TT dinucleotide at the point of strand exchange. HJ branch migration catalyzed by RuvA-RuvB allows RuvC to scan DNA until it finds its consensus sequence, where it cleaves and resolves the cruciform DNA. In Prochlorococcus marinus (strain MIT 9303), this protein is Crossover junction endodeoxyribonuclease RuvC.